We begin with the raw amino-acid sequence, 830 residues long: Ribosome biogenesis protein ERB1 (830 aa).

Residues 1–142 are disordered; that stretch reads MAPQPLKVGT…NKDLPVDEKL (142 aa). Acidic residues-rich tracts occupy residues 35-44 and 52-109; these read VSEESDEEFG and MSDD…DSDS. Positions 131-142 are enriched in basic and acidic residues; the sequence is EENKDLPVDEKL. 6 WD repeats span residues 481–520, 523–563, 660–698, 701–740, 744–783, and 799–830; these read PGDT…EVWR, LHAG…APHI, KTPG…LIRT, SGVK…KPYK, YHNR…DLMQ, and IDGI…LWCS.

Belongs to the WD repeat BOP1/ERB1 family. As to quaternary structure, component of the NOP7 complex, composed of ERB1, NOP7 and YTM1. The complex is held together by ERB1, which interacts with NOP7 via its N-terminal domain and with YTM1 via a high-affinity interaction between the seven-bladed beta-propeller domains of the 2 proteins. The NOP7 complex associates with the 66S pre-ribosome.

It localises to the nucleus. The protein resides in the nucleolus. Its subcellular location is the nucleoplasm. Component of the NOP7 complex, which is required for maturation of the 25S and 5.8S ribosomal RNAs and formation of the 60S ribosome. This Cryptococcus neoformans var. neoformans serotype D (strain JEC21 / ATCC MYA-565) (Filobasidiella neoformans) protein is Ribosome biogenesis protein ERB1.